A 274-amino-acid polypeptide reads, in one-letter code: 2,3,4,5-tetrahydropyridine-2,6-dicarboxylate N-succinyltransferase (274 aa).

It belongs to the transferase hexapeptide repeat family.

The protein localises to the cytoplasm. The catalysed reaction is (S)-2,3,4,5-tetrahydrodipicolinate + succinyl-CoA + H2O = (S)-2-succinylamino-6-oxoheptanedioate + CoA. It functions in the pathway amino-acid biosynthesis; L-lysine biosynthesis via DAP pathway; LL-2,6-diaminopimelate from (S)-tetrahydrodipicolinate (succinylase route): step 1/3. The protein is 2,3,4,5-tetrahydropyridine-2,6-dicarboxylate N-succinyltransferase of Escherichia coli (strain SMS-3-5 / SECEC).